The chain runs to 519 residues: Xylose import ATP-binding protein XylG (519 aa).

ABC transporter domains follow at residues 6–245 (LTMR…VGRE) and 262–507 (LEAR…LTPA). Residue 38 to 45 (GENGAGKS) participates in ATP binding.

The protein belongs to the ABC transporter superfamily. Xylose importer (TC 3.A.1.2.4) family. In terms of assembly, the complex is composed of two ATP-binding proteins (XylG), two transmembrane proteins (XylH) and a solute-binding protein (XylF).

It is found in the cell inner membrane. The enzyme catalyses D-xylose(out) + ATP + H2O = D-xylose(in) + ADP + phosphate + H(+). Functionally, part of the ABC transporter complex XylFGH involved in xylose import. Responsible for energy coupling to the transport system. The protein is Xylose import ATP-binding protein XylG of Burkholderia ambifaria (strain ATCC BAA-244 / DSM 16087 / CCUG 44356 / LMG 19182 / AMMD) (Burkholderia cepacia (strain AMMD)).